The sequence spans 698 residues: MFKLFTARQHDKIWDFDGGIHPPEMKLQSSTVPMRIAPLPDQLIIPLQQHLGPEGELRVRAGEQVLKGQPLTVGRGRTVPVHAPTSGMITAIAPHTTAHPSGLAELCVHITPDGEDRWREQQPWADYRQRDKMALLDRIHQAGIAGLGGAGFPTASKLQGGLNGIITLIINAAECEPYITADDRLMQEHADEVITGIHILRHLLQPQQVLIGIEDNKPEAIAALQRALRGQDGIHLRVVPTKYPSGGAKQLTKILTGKEVPFGKHSSSIGVLMQNVGTVVAIKRAVIDDEPLIERVVTLTGDALSSPGNFWARIGTPVLYLLKLAGFKPQNPPMVIMGGPLMGFTLPSLDVPIVKISNCILAPAETEMGLSEPEQSCIRCGLCVDACPAGLLPQQLYWFSRGEEHEKARNHNLFDCIECGACAYVCPSNIPLVQYYRQEKAEIRALDQESARAAEAKARFEAKQARLAREKLARELRHKQAAVKLTDADQQTVDAAVSRLTRQSDGSESVINIPAGQLPDNSAVIAAREARKAQARARQAEKQQARSTEETTDVVDPRQAAVAAAIARVKAKKAAQVQHVTTDVAEAGSEAIAEDPRKAAVAAAIARVKAKKAVQAQHVTTDVAEAGSEAMAEDPRKAAVAAAIARVKAKKAAQAQHVTTDVAEAGSEAMAEDPRKAAVAAAIARVKAKKAAQAINPD.

2 consecutive 4Fe-4S ferredoxin-type domains span residues 366-397 and 407-436; these read TEMGLSEPEQSCIRCGLCVDACPAGLLPQQLY and KARNHNLFDCIECGACAYVCPSNIPLVQYY. Positions 377, 380, 383, 387, 416, 419, 422, and 426 each coordinate [4Fe-4S] cluster.

Belongs to the 4Fe4S bacterial-type ferredoxin family. RnfC subfamily. The complex is composed of six subunits: RnfA, RnfB, RnfC, RnfD, RnfE and RnfG. [4Fe-4S] cluster is required as a cofactor.

It localises to the cell inner membrane. Part of a membrane-bound complex that couples electron transfer with translocation of ions across the membrane. The polypeptide is Ion-translocating oxidoreductase complex subunit C (Yersinia pseudotuberculosis serotype O:3 (strain YPIII)).